The chain runs to 336 residues: Probable G-protein coupled receptor 82 (336 aa).

Over 1-11 the chain is Extracellular; it reads MNNNTTCIQPS. N-linked (GlcNAc...) asparagine glycans are attached at residues Asn-3 and Asn-4. The helical transmembrane segment at 12–32 threads the bilayer; sequence MISSMALPIIYILLCIVGVFG. At 33–55 the chain is on the cytoplasmic side; the sequence is NTLSQWIFLTKIGKKTSTHIYLS. A helical membrane pass occupies residues 56–76; it reads HLVTANLLVCSAMPFMSIYFL. Topologically, residues 77–92 are extracellular; sequence KGFQWEYQSAQCRVVN. The helical transmembrane segment at 93–115 threads the bilayer; that stretch reads FLGTLSMHASMFVSLLILSWIAI. At 116 to 156 the chain is on the cytoplasmic side; it reads SRYATLMQKDSSQETTSCYEKIFYGHLLKKFRQPNFARKLC. A helical transmembrane segment spans residues 157 to 177; the sequence is IYIWGVVLGIIIPVTVYYSVI. Over 178–197 the chain is Extracellular; the sequence is EATEGEESLCYNRQMELGAM. Residues 198-218 form a helical membrane-spanning segment; the sequence is ISQIAGLIGTTFIGFSFLVVL. Over 219–251 the chain is Cytoplasmic; it reads TSYYSFVSHLRKIRTCTSIMEKDLTYSSVKRHL. The chain crosses the membrane as a helical span at residues 252–272; sequence LVIQILLIVCFLPYSIFKPIF. Residues 273-336 are Extracellular-facing; the sequence is YVLHQRDNCQ…SNSAHMQSYG (64 aa).

The protein belongs to the G-protein coupled receptor 1 family.

It localises to the cell membrane. In terms of biological role, orphan receptor. The protein is Probable G-protein coupled receptor 82 (GPR82) of Homo sapiens (Human).